We begin with the raw amino-acid sequence, 96 residues long: Aspartyl/glutamyl-tRNA(Asn/Gln) amidotransferase subunit C (96 aa).

Belongs to the GatC family. Heterotrimer of A, B and C subunits.

It catalyses the reaction L-glutamyl-tRNA(Gln) + L-glutamine + ATP + H2O = L-glutaminyl-tRNA(Gln) + L-glutamate + ADP + phosphate + H(+). The catalysed reaction is L-aspartyl-tRNA(Asn) + L-glutamine + ATP + H2O = L-asparaginyl-tRNA(Asn) + L-glutamate + ADP + phosphate + 2 H(+). In terms of biological role, allows the formation of correctly charged Asn-tRNA(Asn) or Gln-tRNA(Gln) through the transamidation of misacylated Asp-tRNA(Asn) or Glu-tRNA(Gln) in organisms which lack either or both of asparaginyl-tRNA or glutaminyl-tRNA synthetases. The reaction takes place in the presence of glutamine and ATP through an activated phospho-Asp-tRNA(Asn) or phospho-Glu-tRNA(Gln). The polypeptide is Aspartyl/glutamyl-tRNA(Asn/Gln) amidotransferase subunit C (Wolinella succinogenes (strain ATCC 29543 / DSM 1740 / CCUG 13145 / JCM 31913 / LMG 7466 / NCTC 11488 / FDC 602W) (Vibrio succinogenes)).